Reading from the N-terminus, the 725-residue chain is MDWAINVAHPRLLYKDPKLSVTFIVPSLFHIIIAFVLLGICASDFLCPNVAHISDPNSLRSNGSLVSKTASHASHTGALMAVLLSWCNSSPDLFSNLMSWATSTRETRSTSVSLSIGEVLGACGIILCIVEGSIFIIMSRTHIEISQIQKLSIMRDLLFSLAAMCVMSYVSLMNQVTVLNCLLMAFLYAFYLVVKLTFKLNHSAETPDETAADTSLRENSVSPFLDDSLMASGLLPPIQPGFDISNSITHGIKPSLLSAMDFNSFLSMLENSSLEEDDSRNEMAELNTLRSMTPGQHWSASATVAGEATSAGRPFSEPTNAFTEYRDSERAINSSPAVFAPYRDNPDDEESQEQVLLETTTHGHFGAQEMRRFSKRSLGWIIKIFIPHLSNFSQKSISDAIFSIITVPFFIIFKLSCPQPPSDILSYDPTLNRYSLTTLPIILLFIQSITAPFLLCSILSVLLTYHLGYLVYLFPLILAMALILLLTAFITKVNLHNKFTLSLDSSNILQEKLQKRKLLERLNTSIQIIFLAIGIINIIIWISLLANSLIEMMEIYQKILGLSKAILGLTIFAWGNSVGDLISNISMCRLYKTQTHYQDRVRLATKFFMISCASCLGGVMLNSMGGIGFSGLVSMLFIGAFNDNEWWFLRKVKLQETSQLDNTLNYKFIVSCVFIILQIILLLLFFGGPNNIKRRLTKEMKLVGISMCGLWALATLINILLELFS.

12 helical membrane passes run 21 to 41 (VTFIVPSLFHIIIAFVLLGIC), 119 to 139 (VLGACGIILCIVEGSIFIIMS), 157 to 177 (LLFSLAAMCVMSYVSLMNQVT), 178 to 198 (VLNCLLMAFLYAFYLVVKLTF), 397 to 417 (ISDAIFSIITVPFFIIFKLSC), 439 to 459 (LPIILLFIQSITAPFLLCSIL), 470 to 490 (LVYLFPLILAMALILLLTAFI), 526 to 546 (IQIIFLAIGIINIIIWISLLA), 559 to 579 (ILGLSKAILGLTIFAWGNSVG), 621 to 641 (LNSMGGIGFSGLVSMLFIGAF), 668 to 688 (FIVSCVFIILQIILLLLFFGG), and 704 to 724 (GISMCGLWALATLINILLELF).

The protein belongs to the Ca(2+):cation antiporter (CaCA) (TC 2.A.19) family.

It is found in the membrane. The chain is Protein ECM27 (ECM27) from Saccharomyces cerevisiae (strain ATCC 204508 / S288c) (Baker's yeast).